A 511-amino-acid chain; its full sequence is MDVCGWKEMEVALVNFDNSDEIQEEPGYATDFDSTSPKGRPGGSSFSNGKILISESTNHETAFSKLPGDYADPPGPEPVVLNEGNQRVIINIAGLRFETQLRTLSQFPETLLGDREKRMQFFDSMRNEYFFDRNRPSFDGILYYYQSGGKIRRPANVPIDIFADEISFYELGSEAMDQFREDEGFIKDPETLLPTNDIHRQFWLLFEYPESSSAARAVAVVSVLVVVISITIFCLETLPEFREDRELKVVRDPNLNMSKTVLSQTMFTDPFFMVESTCIVWFTFELVLRFVVCPSKTDFFRNIMNIIDIISIIPYFATLITELVQETEPSAQQNMSLAILRIIRLVRVFRIFKLSRHSKGLQILGQTLKASMRELGLLIFFLFIGVILFSSAVYFAEVDEPESHFSSIPDGFWWAVVTMTTVGYGDMCPTTPGGKIVGTLCAIAGVLTIALPVPVIVSNFNYFYHRETENEEKQNIPGEIERILNSVGSRMGSTDSLNKTNGGCSTEKSRK.

Positions 22-50 (IQEEPGYATDFDSTSPKGRPGGSSFSNGK) are disordered. Residues 218-238 (VAVVSVLVVVISITIFCLETL) traverse the membrane as a helical segment. Residue Asn-256 is glycosylated (N-linked (GlcNAc...) asparagine). Residues 271 to 292 (FFMVESTCIVWFTFELVLRFVV) traverse the membrane as a helical segment. Cys-293 carries the S-palmitoyl cysteine lipid modification. Residues 303 to 323 (IMNIIDIISIIPYFATLITEL) form a helical membrane-spanning segment. Asn-334 carries an N-linked (GlcNAc...) asparagine glycan. A helical; Voltage-sensor transmembrane segment spans residues 339-358 (ILRIIRLVRVFRIFKLSRHS). A helical transmembrane segment spans residues 375 to 395 (LGLLIFFLFIGVILFSSAVYF). A Selectivity filter motif is present at residues 421-426 (TVGYGD). Residues 436–456 (IVGTLCAIAGVLTIALPVPVI) traverse the membrane as a helical segment. Residues 489 to 511 (SRMGSTDSLNKTNGGCSTEKSRK) form a disordered region. Asn-498 carries N-linked (GlcNAc...) asparagine glycosylation.

Belongs to the potassium channel family. A (Shaker) (TC 1.A.1.2) subfamily. Kv1.8/KCNA10 sub-subfamily. In terms of assembly, homotetramer. Interacts with KCN4B/POMP. Interaction with KCN4B/POMP is necessary for the modulation of channel activity by cAMP. In terms of tissue distribution, detected in kidney, in proximal tubules, glomerular endothelium, in vascular endothelium and in smooth muscle cells.

It localises to the membrane. The enzyme catalyses K(+)(in) = K(+)(out). With respect to regulation, the channel activity is up-regulated by cAMP. In terms of biological role, voltage-gated potassium ion channel that mediates K(+) permeability of excitable membranes. When opened in response to the voltage difference across the membrane, KCNA10 channel selectively allows the flow of potassium ions across the membrane down their electrochemical gradient. The polypeptide is Potassium voltage-gated channel subfamily A member 10 (Homo sapiens (Human)).